Reading from the N-terminus, the 394-residue chain is Protein arginine N-methyltransferase 8 (394 aa).

The N-myristoyl glycine moiety is linked to residue G2. A disordered region spans residues 16–40 (MAENAAESTEVNSPPSQPPQPVVPA). 2 consecutive short sequence motifs (SH3-binding) follow at residues 29 to 42 (PPSQ…PAKP) and 53 to 58 (PSCPGR). The segment covering 30–39 (PSQPPQPVVP) has biased composition (pro residues). R58 is subject to Omega-N-methylarginine; by autocatalysis. Position 73 is an asymmetric dimethylarginine; by autocatalysis (R73). One can recognise an SAM-dependent MTase PRMT-type domain in the interval 73 to 394 (RDYYFDSYAH…TSVSNDYKMR (322 aa)). S-adenosyl-L-methionine is bound by residues H86, R95, G119, 119-122 (GSGT), E141, and E170. Active-site residues include E185 and E194.

Belongs to the class I-like SAM-binding methyltransferase superfamily. Protein arginine N-methyltransferase family. PRMT8 subfamily. In terms of assembly, homodimer. Tetramer; individual homodimers associates to form a homotetramer. Homooctamer; individual homodimers associates to form a homooctamer and homooligomerization is required for proper localization to the cell membrane. Heterodimer with PRMT1; heterodimerization may recruit PRMT1 activity to the plasma membrane. Interacts with PRMT2 (via the SH3 domain). Interacts with FYN (via the SH3 domain). Interacts with EWS; independently of EWS methylation status. In terms of tissue distribution, brain-specific.

The protein resides in the cell membrane. It carries out the reaction L-arginyl-[protein] + S-adenosyl-L-methionine = N(omega)-methyl-L-arginyl-[protein] + S-adenosyl-L-homocysteine + H(+). It catalyses the reaction L-arginyl-[protein] + 2 S-adenosyl-L-methionine = N(omega),N(omega)-dimethyl-L-arginyl-[protein] + 2 S-adenosyl-L-homocysteine + 2 H(+). Functionally, S-adenosyl-L-methionine-dependent and membrane-associated arginine methyltransferase that can both catalyze the formation of omega-N monomethylarginine (MMA) and asymmetrical dimethylarginine (aDMA) in proteins such as NIFK, myelin basic protein, histone H4, H2A and H2A/H2B dimer. Able to mono- and dimethylate EWS protein; however its precise role toward EWS remains unclear as it still interacts with fully methylated EWS. The chain is Protein arginine N-methyltransferase 8 from Homo sapiens (Human).